The primary structure comprises 301 residues: Ornithine carbamoyltransferase (301 aa).

Residues Arg100 and 127-130 (HPCQ) each bind carbamoyl phosphate. Residues Asn158, Asp221, and 225 to 226 (SM) contribute to the L-ornithine site. Carbamoyl phosphate contacts are provided by Cys260 and Arg288.

Belongs to the aspartate/ornithine carbamoyltransferase superfamily. OTCase family.

It is found in the cytoplasm. The enzyme catalyses carbamoyl phosphate + L-ornithine = L-citrulline + phosphate + H(+). The protein operates within amino-acid biosynthesis; L-arginine biosynthesis; L-arginine from L-ornithine and carbamoyl phosphate: step 1/3. In terms of biological role, reversibly catalyzes the transfer of the carbamoyl group from carbamoyl phosphate (CP) to the N(epsilon) atom of ornithine (ORN) to produce L-citrulline. The polypeptide is Ornithine carbamoyltransferase (argF) (Vibrio sp. (strain 2693)).